A 267-amino-acid chain; its full sequence is 3-methyl-2-oxobutanoate hydroxymethyltransferase (267 aa).

Residues Asp41 and Asp80 each coordinate Mg(2+). 3-methyl-2-oxobutanoate-binding positions include 41–42 (DS), Asp80, and Lys109. Glu111 contacts Mg(2+). Glu178 functions as the Proton acceptor in the catalytic mechanism.

Belongs to the PanB family. Homodecamer; pentamer of dimers. Requires Mg(2+) as cofactor.

It is found in the cytoplasm. It carries out the reaction 3-methyl-2-oxobutanoate + (6R)-5,10-methylene-5,6,7,8-tetrahydrofolate + H2O = 2-dehydropantoate + (6S)-5,6,7,8-tetrahydrofolate. It participates in cofactor biosynthesis; (R)-pantothenate biosynthesis; (R)-pantoate from 3-methyl-2-oxobutanoate: step 1/2. Catalyzes the reversible reaction in which hydroxymethyl group from 5,10-methylenetetrahydrofolate is transferred onto alpha-ketoisovalerate to form ketopantoate. This chain is 3-methyl-2-oxobutanoate hydroxymethyltransferase, found in Kosmotoga olearia (strain ATCC BAA-1733 / DSM 21960 / TBF 19.5.1).